The sequence spans 252 residues: MKFGIISIFPEMFKAINDFGVTARAIKDSKVSISCFNPRDYTTDRHATVDDTSFGGGAGMVMKYQPLSAAIEDAKNTLGCGTKVVYLSPQGSIFNHRKAQELLQNDSLILLCGRYEGVDERLIQDYVDEEISVGDFVLSGGELPAMLVMDSLIRLLPEVLGNKESVVEDSFYDGLLDYPHYTKPAVLPNGNAVPDVLLSGNHKEIAKWRRKQKLIRTYERRKDLIECLCLSAKDKQILDDYKIDKVSTKGEE.

S-adenosyl-L-methionine is bound by residues Gly113 and 133 to 138; that span reads VGDFVL.

The protein belongs to the RNA methyltransferase TrmD family. As to quaternary structure, homodimer.

Its subcellular location is the cytoplasm. The catalysed reaction is guanosine(37) in tRNA + S-adenosyl-L-methionine = N(1)-methylguanosine(37) in tRNA + S-adenosyl-L-homocysteine + H(+). Functionally, specifically methylates guanosine-37 in various tRNAs. This chain is tRNA (guanine-N(1)-)-methyltransferase, found in Francisella tularensis subsp. holarctica (strain FTNF002-00 / FTA).